We begin with the raw amino-acid sequence, 458 residues long: ATP synthase subunit beta (458 aa).

ATP is bound at residue 148 to 155 (GGAGVGKT).

This sequence belongs to the ATPase alpha/beta chains family. In terms of assembly, F-type ATPases have 2 components, CF(1) - the catalytic core - and CF(0) - the membrane proton channel. CF(1) has five subunits: alpha(3), beta(3), gamma(1), delta(1), epsilon(1). CF(0) has three main subunits: a(1), b(2) and c(9-12). The alpha and beta chains form an alternating ring which encloses part of the gamma chain. CF(1) is attached to CF(0) by a central stalk formed by the gamma and epsilon chains, while a peripheral stalk is formed by the delta and b chains.

The protein resides in the cell inner membrane. It carries out the reaction ATP + H2O + 4 H(+)(in) = ADP + phosphate + 5 H(+)(out). Functionally, produces ATP from ADP in the presence of a proton gradient across the membrane. The catalytic sites are hosted primarily by the beta subunits. The polypeptide is ATP synthase subunit beta (Stutzerimonas stutzeri (strain A1501) (Pseudomonas stutzeri)).